We begin with the raw amino-acid sequence, 538 residues long: Calcium-dependent protein kinase 32 (538 aa).

Positions 1–37 (MGNCCGTAGSLAQNDNKPKKGRKKQNPFSIDYGLHHG) are disordered. A lipid anchor (N-myristoyl glycine) is attached at glycine 2. Residues 63 to 321 (YTLGRELGRG…AQQVLDHPWL (259 aa)) form the Protein kinase domain. ATP contacts are provided by residues 69-77 (LGRGEFGVT) and lysine 92. Residue aspartate 187 is the Proton acceptor of the active site. A Phosphoserine modification is found at serine 227. The tract at residues 327 to 357 (APNVSLGETVRARLKQFTVMNKLKKRALRVI) is autoinhibitory domain. EF-hand domains are found at residues 364–399 (EEASGIREGFQIMDTSQRGKINIDELKIGLQKLGHA), 400–435 (IPQDDLQILMDAGDIDRDGYLDCDEFIAISVHLRKM), 436–470 (GNDEHLKKAFAFFDQNNNGYIEIEELREALSDELG), and 471–506 (TSEEVVDAIIRDVDTDKDGRISYEEFVTMMKTGTDW). Residues aspartate 377, serine 379, lysine 383, glutamate 388, aspartate 413, aspartate 415, aspartate 417, tyrosine 419, glutamate 424, aspartate 449, asparagine 451, asparagine 453, tyrosine 455, glutamate 460, aspartate 484, aspartate 486, aspartate 488, and arginine 490 each coordinate Ca(2+). Serine 492 carries the phosphoserine modification. Residue glutamate 495 coordinates Ca(2+).

Belongs to the protein kinase superfamily. Ser/Thr protein kinase family. CDPK subfamily. As to quaternary structure, interacts with ABF4. Interacts with CNGC18. In terms of tissue distribution, expressed in embryos and most of the vegetative tissues.

Its subcellular location is the nucleus. It localises to the membrane. The enzyme catalyses L-seryl-[protein] + ATP = O-phospho-L-seryl-[protein] + ADP + H(+). It catalyses the reaction L-threonyl-[protein] + ATP = O-phospho-L-threonyl-[protein] + ADP + H(+). With respect to regulation, activated by calcium. Autophosphorylation may play an important role in the regulation of the kinase activity. Its function is as follows. May play a role in signal transduction pathways that involve calcium as a second messenger. Involved in maintaining Ca2+ homeostasis in pollen tube tips by regulating CNGC18. Functions as regulator of the calcium-mediated abscisic acid (ABA) signaling pathway. Phosphorylates ABA-responsive transcription factor ABF4 in vitro. The chain is Calcium-dependent protein kinase 32 from Arabidopsis thaliana (Mouse-ear cress).